The following is a 179-amino-acid chain: Interleukin-10 (179 aa).

The N-terminal stretch at 1–19 (MPSSSALLCCLVFLAGVAA) is a signal peptide. 2 cysteine pairs are disulfide-bonded: Cys-31–Cys-127 and Cys-81–Cys-133. N-linked (GlcNAc...) asparagine glycosylation occurs at Asn-135.

This sequence belongs to the IL-10 family. As to quaternary structure, homodimer. Interacts with IL10RA and IL10RB.

The protein localises to the secreted. Its function is as follows. Major immune regulatory cytokine that acts on many cells of the immune system where it has profound anti-inflammatory functions, limiting excessive tissue disruption caused by inflammation. Mechanistically, IL10 binds to its heterotetrameric receptor comprising IL10RA and IL10RB leading to JAK1 and STAT2-mediated phosphorylation of STAT3. In turn, STAT3 translocates to the nucleus where it drives expression of anti-inflammatory mediators. Targets antigen-presenting cells (APCs) such as macrophages and monocytes and inhibits their release of pro-inflammatory cytokines including granulocyte-macrophage colony-stimulating factor /GM-CSF, granulocyte colony-stimulating factor/G-CSF, IL-1 alpha, IL-1 beta, IL-6, IL-8 and TNF-alpha. Also interferes with antigen presentation by reducing the expression of MHC-class II and co-stimulatory molecules, thereby inhibiting their ability to induce T cell activation. In addition, controls the inflammatory response of macrophages by reprogramming essential metabolic pathways including mTOR signaling. This Bubalus carabanensis (Swamp type water buffalo) protein is Interleukin-10 (IL10).